Here is a 336-residue protein sequence, read N- to C-terminus: UPF0324 membrane protein spr0034 (336 aa).

Transmembrane regions (helical) follow at residues 65–84 (LLQYAVVLLGFGLNISQVFA), 91–113 (PVILSTISIALIIAYLFQRFFAL), 118–140 (ATLVGVGSSICGGSAIAATAPVI), 153–175 (VIFFFNVLAALIFPTLGTWLHLS), 211–233 (SATIVKLTRTLAIIPITLFLSYW), 249–271 (VFPLFILYFILASLLTTLLTSLG), 286–305 (FLIVMAMSAIGLKTNLVAMV), and 312–334 (ILLGAICWIAIILTTLGMQTLIG).

Belongs to the UPF0324 family.

Its subcellular location is the cell membrane. This Streptococcus pneumoniae (strain ATCC BAA-255 / R6) protein is UPF0324 membrane protein spr0034.